The chain runs to 196 residues: Rho-related protein racL (196 aa).

10 to 17 (GDGAVGKT) contacts GTP. An Effector region motif is present at residues 32–40 (YQPTVFDNF). GTP is bound by residues 57 to 61 (DTAGQ) and 116 to 119 (TQND). Cys193 is subject to Cysteine methyl ester. The S-geranylgeranyl cysteine moiety is linked to residue Cys193. Residues 194–196 (IIL) constitute a propeptide, removed in mature form.

It belongs to the small GTPase superfamily. Rho family.

It is found in the cell membrane. In Dictyostelium discoideum (Social amoeba), this protein is Rho-related protein racL (racL).